We begin with the raw amino-acid sequence, 525 residues long: MAAAPPLRDRLSFLHRLPILLKGTSDDDVPCPGYLFEEIAKISHESPGSSQCLLEYLLSRLHSSSGHGKLKVLKILLYLCSHGSSFFLLILKRNSAFIQEAAAFAGPPDPLHGNSLYQKVRAAAQDLGSTLFSDTVLPLAPSQPLGTPPATGMGSQARPHSTLQGFGYSKEHGRTAVRHQPGQAGGGWDELDSGPSSQNSSQNSDLSRVSDSGSHSGSDSHSGASREPGDLAERVEVVALSDCQQELSLVRTVTRGPRAFLSREEAQHFIKACGLLNCEAVLQLLTCHLRGTSECTQLRALCAIASLGSSDLLPQEHILLRTRPWLQELSMGSPGPVTNKATKILRHFEASCGQLSPARGTSAEPGPTAALPGPSDLLTDAVPLPGSQVFLQPLSSTPVSSRSPAPSSGMPSSPVPTPPPDASPIPAPGDPSEAEARLAESRRWRPERIPGGTDSPKRGPSSCAWSRDSLFAGMELVACPRLVGAGAAAGESCPDAPRAPQTSSQRTAAKEPPGSEPSAFAFLNA.

One can recognise an ENTH domain in the interval 8 to 141 (RDRLSFLHRL…FSDTVLPLAP (134 aa)). The segment at 139–229 (LAPSQPLGTP…SHSGASREPG (91 aa)) is disordered. Residues 193 to 225 (SGPSSQNSSQNSDLSRVSDSGSHSGSDSHSGAS) are compositionally biased toward low complexity. Phosphoserine is present on residues Ser-333 and Ser-356. The disordered stretch occupies residues 355–465 (LSPARGTSAE…PKRGPSSCAW (111 aa)). Positions 393–412 (PLSSTPVSSRSPAPSSGMPS) are enriched in low complexity. Positions 413 to 429 (SPVPTPPPDASPIPAPG) are enriched in pro residues. Basic and acidic residues predominate over residues 434–448 (AEARLAESRRWRPER). The segment at 467–477 (RDSLFAGMELV) is interaction with AP4B1. The segment at 487–525 (AAAGESCPDAPRAPQTSSQRTAAKEPPGSEPSAFAFLNA) is disordered. The interval 515–525 (SEPSAFAFLNA) is interaction with AP4E1.

In terms of assembly, interacts with AP4B1 and AP4E1; the interaction is direct and mediates the association of TEPSIN with the adapter-like complex 4 (AP-4), a heterotetramer composed of AP4B1, AP4E1, AP4M1 and AP4S1.

It localises to the golgi apparatus. The protein localises to the trans-Golgi network membrane. Its subcellular location is the cytoplasmic vesicle. The protein resides in the cytoplasm. It is found in the cytosol. Its function is as follows. Associates with the adapter-like complex 4 (AP-4) and may therefore play a role in vesicular trafficking of proteins at the trans-Golgi network. The sequence is that of AP-4 complex accessory subunit Tepsin from Homo sapiens (Human).